The chain runs to 120 residues: Fluoride-specific ion channel FluC 1 (120 aa).

2 helical membrane passes run 3–23 (ALLTAVGAAFGALLRYCLNCA) and 42–62 (LGCLLAGALAALPLPAAVAAL). Residues G69 and T72 each contribute to the Na(+) site. The helical transmembrane segment at 99-119 (ANLAAGVGAAVLGMAAVGWFL) threads the bilayer.

Belongs to the fluoride channel Fluc/FEX (TC 1.A.43) family.

It is found in the cell membrane. It carries out the reaction fluoride(in) = fluoride(out). Na(+) is not transported, but it plays an essential structural role and its presence is essential for fluoride channel function. Its function is as follows. Fluoride-specific ion channel. Important for reducing fluoride concentration in the cell, thus reducing its toxicity. This chain is Fluoride-specific ion channel FluC 1, found in Thermobifida fusca (strain YX).